Here is a 176-residue protein sequence, read N- to C-terminus: RNA pyrophosphohydrolase (176 aa).

One can recognise a Nudix hydrolase domain in the interval 6–149; the sequence is GYRPNVGIVI…KRDVYRRVMK (144 aa). Residues 38-59 carry the Nudix box motif; it reads GGINPGESPEQAMYRELYEEVG.

This sequence belongs to the Nudix hydrolase family. RppH subfamily. A divalent metal cation serves as cofactor.

Its function is as follows. Accelerates the degradation of transcripts by removing pyrophosphate from the 5'-end of triphosphorylated RNA, leading to a more labile monophosphorylated state that can stimulate subsequent ribonuclease cleavage. In Photorhabdus laumondii subsp. laumondii (strain DSM 15139 / CIP 105565 / TT01) (Photorhabdus luminescens subsp. laumondii), this protein is RNA pyrophosphohydrolase.